The sequence spans 473 residues: Sun domain-containing protein 1 (473 aa).

Positions 1 to 47 (MALRHTISPQFSNRHSPPVTRSVSRTGVHQPLDTSTPVTRRDSQPGT) are disordered. Positions 7–47 (ISPQFSNRHSPPVTRSVSRTGVHQPLDTSTPVTRRDSQPGT) are enriched in polar residues. Coiled-coil stretches lie at residues 163–191 (ISNL…LENV) and 204–235 (EELK…STKI). The tract at residues 237–257 (HSTPEKAPETAPTASLPPSSQ) is disordered. The span at 248 to 257 (PTASLPPSSQ) shows a compositional bias: polar residues. The helical transmembrane segment at 262–282 (HITRRALLGVNVANSLIGASI) threads the bilayer. Residues 279–443 (GASIDHSCSS…YLIRVYGEPV (165 aa)) enclose the SUN domain. Residues 443-473 (VDPPKETQPMTDNGTESKLESAIVNSVSETA) are disordered.

It is found in the nucleus membrane. The protein resides in the nucleus envelope. Its function is as follows. Involved in centrosome attachment to the nucleus. Required for zyg-12 localization to the nuclear envelope. Together with pot-1, it is required to anchor telomeres to the nuclear envelope in embryos. This Caenorhabditis elegans protein is Sun domain-containing protein 1.